The sequence spans 1199 residues: Ecdysone-induced protein 75B, isoforms C/D (1199 aa).

The disordered stretch occupies residues 130-182 (TTDGPTAVLQQQQPQQQMPQHFESLPHHHPQQEHQPQQQQQQHHLQHHPHPHV). Low complexity-rich tracts occupy residues 139–149 (QQQQPQQQMPQ) and 162–172 (EHQPQQQQQQH). Positions 242 to 318 (TVLCRVCGDK…VGMSRDAVRF (77 aa)) form a DNA-binding region, nuclear receptor. 2 NR C4-type zinc fingers span residues 245–265 (CRVCGDKASGFHYGVHSCEGC) and 282–306 (CTKNQQCSILRINRNRCQYCRLKKC). An NR LBD domain is found at 352–600 (DQPRLLAAVL…QQMWSMEDGN (249 aa)). Disordered stretches follow at residues 624–665 (KSPL…SALA), 771–808 (LDSPTDSGIESGNEKNECKAVSSGGSSSCSSPRSSVDD), 831–851 (VSVSPVRSPQPSTSSHLKRQI), 895–961 (AEAD…SSHS), 991–1104 (ENST…SNSA), and 1155–1188 (VTVTASNGGPPSAAASPAPSSSPPASVGSPNPGL). 5 stretches are compositionally biased toward low complexity: residues 641 to 653 (GSPSSSQPQGVSL), 792 to 804 (SSGGSSSCSSPRS), 831 to 845 (VSVSPVRSPQPSTSS), 897 to 942 (ADAS…AQSQ), and 950 to 961 (SSPKASMASSHS). Composition is skewed to polar residues over residues 993 to 1006 (STAASSTTNGVGNR) and 1018 to 1040 (AVQNQQRWGSSSVITTTCQQRQQ). 3 stretches are compositionally biased toward low complexity: residues 1041–1077 (SVSPHSNGSSSSSSSSSSSSSSSSSTSSNCSSSSASS), 1086–1104 (STSNGTSAPASSSSGSNSA), and 1159–1187 (ASNGGPPSAAASPAPSSSPPASVGSPNPG).

Belongs to the nuclear hormone receptor family. NR1 subfamily.

The protein resides in the nucleus. Its function is as follows. Implicated in the regulation of ecdysone-triggered gene hierarchies. Probably plays a key role in mediating the regulation of the larval molt by 20-OH-ecdysone. This chain is Ecdysone-induced protein 75B, isoforms C/D (Eip75B), found in Drosophila melanogaster (Fruit fly).